Here is a 248-residue protein sequence, read N- to C-terminus: Ribosomal RNA small subunit methyltransferase J (248 aa).

S-adenosyl-L-methionine-binding positions include 98–99 (RD), 114–115 (ER), 150–151 (SS), and Asp-168.

It belongs to the methyltransferase superfamily. RsmJ family.

The protein resides in the cytoplasm. The catalysed reaction is guanosine(1516) in 16S rRNA + S-adenosyl-L-methionine = N(2)-methylguanosine(1516) in 16S rRNA + S-adenosyl-L-homocysteine + H(+). Specifically methylates the guanosine in position 1516 of 16S rRNA. The chain is Ribosomal RNA small subunit methyltransferase J from Shewanella denitrificans (strain OS217 / ATCC BAA-1090 / DSM 15013).